A 255-amino-acid polypeptide reads, in one-letter code: 4-hydroxy-tetrahydrodipicolinate reductase (255 aa).

Residues 8–13 (GATGRV), 88–90 (GTT), and 112–115 (ATNM) contribute to the NAD(+) site. Histidine 144 functions as the Proton donor/acceptor in the catalytic mechanism. Histidine 145 contacts (S)-2,3,4,5-tetrahydrodipicolinate. Lysine 148 serves as the catalytic Proton donor. 154-155 (GT) provides a ligand contact to (S)-2,3,4,5-tetrahydrodipicolinate.

The protein belongs to the DapB family.

The protein resides in the cytoplasm. The catalysed reaction is (S)-2,3,4,5-tetrahydrodipicolinate + NAD(+) + H2O = (2S,4S)-4-hydroxy-2,3,4,5-tetrahydrodipicolinate + NADH + H(+). It catalyses the reaction (S)-2,3,4,5-tetrahydrodipicolinate + NADP(+) + H2O = (2S,4S)-4-hydroxy-2,3,4,5-tetrahydrodipicolinate + NADPH + H(+). It functions in the pathway amino-acid biosynthesis; L-lysine biosynthesis via DAP pathway; (S)-tetrahydrodipicolinate from L-aspartate: step 4/4. In terms of biological role, catalyzes the conversion of 4-hydroxy-tetrahydrodipicolinate (HTPA) to tetrahydrodipicolinate. In Helicobacter hepaticus (strain ATCC 51449 / 3B1), this protein is 4-hydroxy-tetrahydrodipicolinate reductase.